Reading from the N-terminus, the 127-residue chain is Calcium-binding protein PBP1 (127 aa).

The segment covering 1–18 (MASPKSSTRPNQENQEPQ) has biased composition (polar residues). A disordered region spans residues 1–20 (MASPKSSTRPNQENQEPQFQ). The EF-hand domain maps to 72–107 (LTDDDVRYMINEGDFDRDGALNQMEFCVLMFRLSPE). The Ca(2+) site is built by aspartate 85, aspartate 87, aspartate 89, and glutamate 96.

Interacts with PID.

Its function is as follows. Potential calcium sensor that binds calcium in vitro. This Arabidopsis thaliana (Mouse-ear cress) protein is Calcium-binding protein PBP1 (PBP1).